Consider the following 2568-residue polypeptide: Highly reducing polyketide synthase AN6791 (2568 aa).

Residues 11–445 (AEPIAIVGLS…GTNAHLIVES (435 aa)) enclose the Ketosynthase family 3 (KS3) domain. Residues C200, H326, and H366 each act as for beta-ketoacyl synthase activity in the active site. A Malonyl-CoA:ACP transacylase (MAT) domain is found at 558 to 882 (VFTGQGAQWY…GSLVREVSAV (325 aa)). The interval 949–1087 (HDLLGSLVLG…GLITMEPEDA (139 aa)) is N-terminal hotdog fold. The PKS/mFAS DH domain maps to 949–1258 (HDLLGSLVLG…FQSVGRSAAP (310 aa)). Residue H981 is the Proton acceptor; for dehydratase activity of the active site. The tract at residues 1104–1258 (TRRFGPSDLY…FQSVGRSAAP (155 aa)) is C-terminal hotdog fold. Residue D1169 is the Proton donor; for dehydratase activity of the active site. The interval 1311–1620 (RACLYFIYDA…EVRDCESDEW (310 aa)) is methyltransferase (CMet) domain. The region spanning 1857-2174 (GLLDTIAFDD…VGKHSGKVVL (318 aa)) is the Enoyl reductase (ER) domain. The 179-residue stretch at 2197–2375 (ASYLLVGGAG…AVSMDLGPVK (179 aa)) folds into the Ketoreductase (KR) domain. The Carrier domain maps to 2481 to 2558 (QAEKLVVEAI…ALASEVTRKS (78 aa)). At S2518 the chain carries O-(pantetheine 4'-phosphoryl)serine.

The cofactor is pantetheine 4'-phosphate.

It participates in secondary metabolite biosynthesis. Highly reducing polyketide synthase; part of a cluster that mediates the biosynthesis of a yet undetermined secondary metabolite. With esterase AN6793, produces a pathway intermediate compound with molecular weight 258. This chain is Highly reducing polyketide synthase AN6791, found in Emericella nidulans (strain FGSC A4 / ATCC 38163 / CBS 112.46 / NRRL 194 / M139) (Aspergillus nidulans).